Here is a 164-residue protein sequence, read N- to C-terminus: Sec-independent protein translocase protein TatB (164 aa).

Residues 1–21 traverse the membrane as a helical segment; the sequence is MIDIGLSKMALIGAVALIVIG. The interval 81–102 is disordered; it reads ASEFQKDWESGTSDAAATGHDG.

The protein belongs to the TatB family. In terms of assembly, the Tat system comprises two distinct complexes: a TatABC complex, containing multiple copies of TatA, TatB and TatC subunits, and a separate TatA complex, containing only TatA subunits. Substrates initially bind to the TatABC complex, which probably triggers association of the separate TatA complex to form the active translocon.

It localises to the cell inner membrane. In terms of biological role, part of the twin-arginine translocation (Tat) system that transports large folded proteins containing a characteristic twin-arginine motif in their signal peptide across membranes. Together with TatC, TatB is part of a receptor directly interacting with Tat signal peptides. TatB may form an oligomeric binding site that transiently accommodates folded Tat precursor proteins before their translocation. The polypeptide is Sec-independent protein translocase protein TatB (Paracidovorax citrulli (strain AAC00-1) (Acidovorax citrulli)).